The primary structure comprises 304 residues: GTPase Era (304 aa).

Positions 11 to 179 constitute an Era-type G domain; that stretch reads YCGFIAIVGR…QKIVRKSLRE (169 aa). The G1 stretch occupies residues 19 to 26; that stretch reads GRPNVGKS. GTP is bound at residue 19 to 26; the sequence is GRPNVGKS. The G2 stretch occupies residues 45-49; that stretch reads QTTRH. The tract at residues 66 to 69 is G3; sequence DTPG. GTP contacts are provided by residues 66-70 and 128-131; these read DTPGL and NKVD. A G4 region spans residues 128–131; sequence NKVD. The interval 158–160 is G5; the sequence is ISA. In terms of domain architecture, KH type-2 spans 210–287; sequence TGEELPYSVT…HLELWVKVKA (78 aa).

The protein belongs to the TRAFAC class TrmE-Era-EngA-EngB-Septin-like GTPase superfamily. Era GTPase family. In terms of assembly, monomer.

It localises to the cytoplasm. Its subcellular location is the cell inner membrane. In terms of biological role, an essential GTPase that binds both GDP and GTP, with rapid nucleotide exchange. Plays a role in 16S rRNA processing and 30S ribosomal subunit biogenesis and possibly also in cell cycle regulation and energy metabolism. This Actinobacillus pleuropneumoniae serotype 5b (strain L20) protein is GTPase Era.